A 215-amino-acid polypeptide reads, in one-letter code: NAD(P)H-quinone oxidoreductase subunit I (215 aa).

4Fe-4S ferredoxin-type domains follow at residues 55–84 (GRIH…VDWV) and 95–124 (RNYS…MTEE). [4Fe-4S] cluster contacts are provided by C64, C67, C70, C74, C104, C107, C110, and C114. The span at 169-180 (MDPHGVASDRPR) shows a compositional bias: basic and acidic residues. Residues 169 to 215 (MDPHGVASDRPRAGQLPAQVLETLTPPAKPTAKNDGQSSSEAKEGDA) form a disordered region.

This sequence belongs to the complex I 23 kDa subunit family. In terms of assembly, NDH-1 is composed of at least 11 different subunits. [4Fe-4S] cluster serves as cofactor.

The protein resides in the cellular thylakoid membrane. It catalyses the reaction a plastoquinone + NADH + (n+1) H(+)(in) = a plastoquinol + NAD(+) + n H(+)(out). The enzyme catalyses a plastoquinone + NADPH + (n+1) H(+)(in) = a plastoquinol + NADP(+) + n H(+)(out). Its function is as follows. NDH-1 shuttles electrons from an unknown electron donor, via FMN and iron-sulfur (Fe-S) centers, to quinones in the respiratory and/or the photosynthetic chain. The immediate electron acceptor for the enzyme in this species is believed to be plastoquinone. Couples the redox reaction to proton translocation, and thus conserves the redox energy in a proton gradient. The sequence is that of NAD(P)H-quinone oxidoreductase subunit I from Synechococcus sp. (strain CC9605).